A 773-amino-acid chain; its full sequence is MLGRSLLALLPFVGLAFSQSASQFTDPTTGFQFTGITDPVHDVTYGFVFPPLATSGAQSTEFIGEVVAPIASKWIGIALGGAMNNDLLLVAWANGNQIVSSTRWATGYVQPTAYTGTATLTTLPETTINSTHWKWVFRCQGCTEWNNGGGIDVTSQGVLAWAFSNVAVDDPSDPQSTFSEHTDFGFFGIDYSTAHSANYQNYLNGDSGNPTTTSTKPTSTSSSVTTGPTVSATPYDYIIVGAGPGGIIAADRLSEAGKKVLLLERGGPSTKQTGGTYVAPWATSSGLTKFDIPGLFESLFTDSNPFWWCKDITVFAGCLVGGGTSVNGALYWYPNDGDFSSSVGWPSSWTNHAPYTSKLSSRLPSTDHPSTDGQRYLEQSFNVVSQLLKGQGYNQATINDNPNYKDHVFGYSAFDFLNGKRAGPVATYLQTALARPNFTFKTNVMVSNVVRNGSQILGVQTNDPTLGPNGFIPVTPKGRVILSAGAFGTSRILFQSGIGPTDMIQTVQSNPTAAAALPPQNQWINLPVGMNAQDNPSINLVFTHPSIDAYENWADVWSNPRPADAAQYLANQSGVFAGASPKLNFWRAYSGSDGFTRYAQGTVRPGAASVNSSLPYNASQIFTITVYLSTGIQSRGRIGIDAALRGTVLTPPWLVNPVDKTVLLQALHDVVSNIGSIPGLTMITPDVTQTLEEYVDAYDPATMNSNHWVSSTTIGSSPQSAVVDSNVKVFGTNNLFIVDAGIIPHLPTGNPQGTLMSAAEQAAAKILALAGGP.

The signal sequence occupies residues 1 to 18 (MLGRSLLALLPFVGLAFS). Glutamine 19 carries the post-translational modification Pyrrolidone carboxylic acid. Residues 19–208 (QSASQFTDPT…YQNYLNGDSG (190 aa)) are heme domain. Residues methionine 83 and histidine 181 each contribute to the heme site. The tract at residues 203–227 (LNGDSGNPTTTSTKPTSTSSSVTTG) is disordered. Over residues 210-227 (PTTTSTKPTSTSSSVTTG) the composition is skewed to low complexity. Positions 235 to 773 (YDYIIVGAGP…AKILALAGGP (539 aa)) are oxidoreductase. 236–265 (DYIIVGAGPGGIIAADRLSEAGKKVLLLER) lines the FAD pocket. Histidine 707 functions as the Proton acceptor in the catalytic mechanism.

In the C-terminal section; belongs to the GMC oxidoreductase family. It depends on FAD as a cofactor. Heme serves as cofactor.

Its subcellular location is the secreted. The enzyme catalyses D-cellobiose + A = D-cellobiono-1,5-lactone + AH2. In terms of biological role, degrades both lignin and cellulose. Oxidizes cellobiose to cellobionolactone. The polypeptide is Cellobiose dehydrogenase (CDH-1) (Phanerodontia chrysosporium (White-rot fungus)).